The chain runs to 1210 residues: Multimerin-1 (1210 aa).

Residues 1–19 form the signal peptide; the sequence is MLGLKFLVLLSILWGRVFR. The interval 57–102 is disordered; sequence ATQNPSTQGPAAAERSSEDDVLLQSTSQPSETSTPPEGRHQTPLEK. Residues 80–92 show a composition bias toward low complexity; the sequence is QSTSQPSETSTPP. N-linked (GlcNAc...) asparagine glycosylation is present at Asn133. Residues 143 to 155 are compositionally biased toward polar residues; sequence SRKSDQQEVSTKS. Positions 143-190 are disordered; the sequence is SRKSDQQEVSTKSAGDMGNRSARETHLRRSDNSRNQRPSYQKPSFETT. Asn161 carries an N-linked (GlcNAc...) asparagine glycan. The segment covering 163–176 has biased composition (basic and acidic residues); it reads SARETHLRRSDNSR. Over residues 177 to 189 the composition is skewed to polar residues; that stretch reads NQRPSYQKPSFET. In terms of domain architecture, EMI spans 192 to 267; the sequence is GKNWCAHVHT…PGYIGPNCQL (76 aa). Disulfide bonds link Cys196–Cys257, Cys222–Cys230, and Cys256–Cys265. O-linked (Fuc) threonine glycosylation is present at Thr201. The O-linked (Fuc) threonine glycan is linked to Thr250. Positions 276–299 are disordered; sequence AHSNQAESHTAVDQGRAQQQKQDC. Residues 303-338 adopt a coiled-coil conformation; the sequence is AMIQKLAEQLSQQERKLSLLQKKVDNASLVADDMRN. Asn328, Asn415, Asn491, Asn525, Asn560, Asn602, Asn712, Asn765, Asn810, Asn822, Asn903, Asn915, Asn963, and Asn1000 each carry an N-linked (GlcNAc...) asparagine glycan. A coiled-coil region spans residues 564 to 690; sequence LLEMEKESAR…RHNLLRNEVQ (127 aa). The stretch at 809–846 forms a coiled coil; the sequence is FNETTSQVNKCQQNMSHLEENMLSVTKTAKEFETRLQG. The region spanning 1023 to 1059 is the EGF-like domain; sequence EHSSCSSFPCQNGGTCISGRSNFICACRHPFMGDTCT. 3 cysteine pairs are disulfide-bonded: Cys1027/Cys1038, Cys1032/Cys1047, and Cys1049/Cys1058. The O-linked (Fuc) threonine glycan is linked to Thr1037. The 133-residue stretch at 1078–1210 folds into the C1q domain; the sequence is RYAPMVAFFV…TFSGYLLYRT (133 aa).

Multimeric. Composed of varying sized, disulfide-linked multimers, the smallest of which is a homotrimer. Proteolysis of the promultimerin in the N-terminal region, leads to the mature p155 form that is stored in platelets. Interacts with factor V/Va. Extensively N-glycosylated. Post-translationally, O-fucosylated within the EMI domain (at Thr-201 and Thr-250) by FUT10/POFUT3 and FUT11/POFUT4. O-fucosylation at Thr-201 and Thr-1037 are required for facilitating protein folding and secretion.

It localises to the secreted. In terms of biological role, carrier protein for platelet (but not plasma) factor V/Va. Plays a role in the storage and stabilization of factor V in platelets. Upon release following platelet activation, may limit platelet and plasma factor Va-dependent thrombin generation. Ligand for integrin alpha-IIb/beta-3 and integrin alpha-V/beta-3 on activated platelets, and may function as an extracellular matrix or adhesive protein. The chain is Multimerin-1 from Mus musculus (Mouse).